Reading from the N-terminus, the 327-residue chain is Undecaprenyl-phosphate 4-deoxy-4-formamido-L-arabinose transferase (327 aa).

2 helical membrane passes run 235–255 (LLSL…VLLV) and 270–290 (VFTL…GMGL).

This sequence belongs to the glycosyltransferase 2 family.

The protein localises to the cell inner membrane. It catalyses the reaction UDP-4-deoxy-4-formamido-beta-L-arabinose + di-trans,octa-cis-undecaprenyl phosphate = 4-deoxy-4-formamido-alpha-L-arabinopyranosyl di-trans,octa-cis-undecaprenyl phosphate + UDP. Its pathway is glycolipid biosynthesis; 4-amino-4-deoxy-alpha-L-arabinose undecaprenyl phosphate biosynthesis; 4-amino-4-deoxy-alpha-L-arabinose undecaprenyl phosphate from UDP-4-deoxy-4-formamido-beta-L-arabinose and undecaprenyl phosphate: step 1/2. It functions in the pathway bacterial outer membrane biogenesis; lipopolysaccharide biosynthesis. In terms of biological role, catalyzes the transfer of 4-deoxy-4-formamido-L-arabinose from UDP to undecaprenyl phosphate. The modified arabinose is attached to lipid A and is required for resistance to polymyxin and cationic antimicrobial peptides. This is Undecaprenyl-phosphate 4-deoxy-4-formamido-L-arabinose transferase from Yersinia pseudotuberculosis serotype IB (strain PB1/+).